Here is a 262-residue protein sequence, read N- to C-terminus: Malonyl-[acyl-carrier protein] O-methyltransferase (262 aa).

Belongs to the methyltransferase superfamily.

The catalysed reaction is malonyl-[ACP] + S-adenosyl-L-methionine = malonyl-[ACP] methyl ester + S-adenosyl-L-homocysteine. It participates in cofactor biosynthesis; biotin biosynthesis. In terms of biological role, converts the free carboxyl group of a malonyl-thioester to its methyl ester by transfer of a methyl group from S-adenosyl-L-methionine (SAM). It allows to synthesize pimeloyl-ACP via the fatty acid synthetic pathway. In Dechloromonas aromatica (strain RCB), this protein is Malonyl-[acyl-carrier protein] O-methyltransferase.